The following is a 210-amino-acid chain: Isochorismatase domain-containing protein 2B (210 aa).

An N6-succinyllysine modification is found at lysine 178.

The protein belongs to the isochorismatase family. In terms of assembly, interacts with CDKN2A. As to expression, ubiquitous. Expressed predominantly in uterus, stomach and urinary tract.

It localises to the cytoplasm. The protein localises to the nucleus. The chain is Isochorismatase domain-containing protein 2B (Isoc2b) from Mus musculus (Mouse).